The following is a 382-amino-acid chain: Solvent efflux pump periplasmic linker SrpA (382 aa).

Positions 1–23 (MRQIRSPRALRVIPLTALMLISG) are cleaved as a signal peptide. A lipid anchor (N-palmitoyl cysteine) is attached at Cys-24. Residue Cys-24 is the site of S-diacylglycerol cysteine attachment. A coiled-coil region spans residues 98-127 (RTYEAQLRRAEANRTSAQNLARRYETLLKT).

The protein belongs to the membrane fusion protein (MFP) (TC 8.A.1) family.

Its subcellular location is the cell inner membrane. The periplasmic linker protein component of an organic solvent efflux pump. Involved in export of a number of low log POW compounds including hexane (log POW 3.5), toluene (log POW 2.5) and dimethylphthalate (log POW 2.3). The solvent resistance phenotype has been postulated to depend on the operon expression level. The sequence is that of Solvent efflux pump periplasmic linker SrpA (srpA) from Pseudomonas putida (Arthrobacter siderocapsulatus).